The chain runs to 303 residues: Recombination-associated protein RdgC (303 aa).

It belongs to the RdgC family.

The protein resides in the cytoplasm. It is found in the nucleoid. In terms of biological role, may be involved in recombination. The polypeptide is Recombination-associated protein RdgC (Yersinia enterocolitica serotype O:8 / biotype 1B (strain NCTC 13174 / 8081)).